We begin with the raw amino-acid sequence, 511 residues long: MMKMRWLSAAVMLTLYTSSSWAFSIDDVAKQAQSLAGKGYEAPKSNLPSVFRDMKYADYQQIQFNSDKAYWSNLKTPFKLEFYHQGMYFDTPVKINEVTATTVKRIKYSPDYFNFGDVKHDKDTVKDLGFAGFKVLYPINSKDKNDEILSMLGASYFRVIGAGQVYGLSARGLAIDTALPSGEEFPRFREFWIERPKPTDKRLTIYALLDSPRATGAYRFVVMPGRDTVVDVQSKVYLRDKVGKLGVAPLTSMFLFGPNQPSPATNYRPELHDSNGLSIHAGNGEWIWRPLNNPKHLAISSYAMENPQGFGLLQRGRDFSRFEDLDDRYDLRPSAWVTPKGEWGKGKVELVEIPTNDETNDNIVAYWTPDQLPEPGKEMNFKYTITFSRDEDKLHAPDNAWVQQTRRSTGDVKQSNLIRQPDGTIAFVVDFTGTEMKKLPQDTPVTAQTSIGDNGEIVESSVRYNPAIKGWRLTMRVKVKDAKKPTEMRAALATADKTLSETWSYQLPANE.

A signal peptide spans 1–22; sequence MMKMRWLSAAVMLTLYTSSSWA.

It belongs to the OpgD/OpgG family.

The protein localises to the periplasm. It participates in glycan metabolism; osmoregulated periplasmic glucan (OPG) biosynthesis. Its function is as follows. Involved in the biosynthesis of osmoregulated periplasmic glucans (OPGs). This Escherichia fergusonii (strain ATCC 35469 / DSM 13698 / CCUG 18766 / IAM 14443 / JCM 21226 / LMG 7866 / NBRC 102419 / NCTC 12128 / CDC 0568-73) protein is Glucans biosynthesis protein G.